The primary structure comprises 262 residues: Global transcriptional regulator CodY (262 aa).

The segment at 1–159 (MAHLLEKTRK…SSTVVGIQLL (159 aa)) is GAF domain. Residues 207-226 (ASVIADRIGITRSVIVNALR) constitute a DNA-binding region (H-T-H motif).

The protein belongs to the CodY family.

It is found in the cytoplasm. DNA-binding global transcriptional regulator which is involved in the adaptive response to starvation and acts by directly or indirectly controlling the expression of numerous genes in response to nutrient availability. During rapid exponential growth, CodY is highly active and represses genes whose products allow adaptation to nutrient depletion. The chain is Global transcriptional regulator CodY from Streptococcus gordonii (strain Challis / ATCC 35105 / BCRC 15272 / CH1 / DL1 / V288).